Reading from the N-terminus, the 252-residue chain is Triosephosphate isomerase (252 aa).

Residue 10–12 coordinates substrate; that stretch reads NWK. His-96 acts as the Electrophile in catalysis. Glu-168 functions as the Proton acceptor in the catalytic mechanism. Residues Gly-174, Ser-214, and 235–236 contribute to the substrate site; that span reads GG.

Belongs to the triosephosphate isomerase family. Homodimer.

It localises to the cytoplasm. The catalysed reaction is D-glyceraldehyde 3-phosphate = dihydroxyacetone phosphate. It functions in the pathway carbohydrate biosynthesis; gluconeogenesis. It participates in carbohydrate degradation; glycolysis; D-glyceraldehyde 3-phosphate from glycerone phosphate: step 1/1. In terms of biological role, involved in the gluconeogenesis. Catalyzes stereospecifically the conversion of dihydroxyacetone phosphate (DHAP) to D-glyceraldehyde-3-phosphate (G3P). The chain is Triosephosphate isomerase from Lactococcus lactis subsp. lactis (strain IL1403) (Streptococcus lactis).